A 427-amino-acid polypeptide reads, in one-letter code: Glutamate-1-semialdehyde 2,1-aminomutase (427 aa).

Position 265 is an N6-(pyridoxal phosphate)lysine (Lys-265).

Belongs to the class-III pyridoxal-phosphate-dependent aminotransferase family. HemL subfamily. As to quaternary structure, homodimer. It depends on pyridoxal 5'-phosphate as a cofactor.

Its subcellular location is the cytoplasm. It catalyses the reaction (S)-4-amino-5-oxopentanoate = 5-aminolevulinate. It participates in porphyrin-containing compound metabolism; protoporphyrin-IX biosynthesis; 5-aminolevulinate from L-glutamyl-tRNA(Glu): step 2/2. This is Glutamate-1-semialdehyde 2,1-aminomutase from Pseudomonas savastanoi pv. phaseolicola (strain 1448A / Race 6) (Pseudomonas syringae pv. phaseolicola (strain 1448A / Race 6)).